An 806-amino-acid chain; its full sequence is Ribonucleoside-diphosphate reductase large subunit-like protein (806 aa).

It belongs to the ribonucleoside diphosphate reductase large chain family.

The protein resides in the virion. The protein localises to the host cytoplasm. Its function is as follows. Does not possess a ribonucleotide reductase activity. Betaherpesviruses probably use another strategy to expand the dNTP pool in a quiescent host cell. This is Ribonucleoside-diphosphate reductase large subunit-like protein from Human herpesvirus 7 (strain JI) (HHV-7).